We begin with the raw amino-acid sequence, 434 residues long: MRFFRRKIAIIVILAYAIFSLYAAYNVFFSKRVISRVHRVVKKGSVIIETGKAGEKEWNPWEEDERAHSVVVQKRRDAFRLYRDQAAKNRPKTYKVQIWGKAAIGLYLWEHILEGSLNPSDKSSQWREGEIQSGKIHFSFYTGPAVVQGHVPPDTDSVVLVLNGREQQKISYSVQWLQHVQSLIQARTISRVAVVLLGNEQCNNNWISPYLKRNGGFVDLLFLVYDSPWVNDKDIFQWPLGVATYRHFPVVTLSSQMVKKDRPYLCNFLGTIYKNSSRESLMNLLKQNNMEKDCLMHAREKWLPQETSDTSRQYQMALAQSDLTLCPVGVNSECYRIYEACAYGSVPVVEDVLTPGACAVGNRSPLRLLKDAGAPFIFLKDWKELPVILERERAMSQKEKTERRMRLLEWYSSFRQQMKDRFTEVLEENFFKIT.

Topologically, residues 1 to 7 are cytoplasmic; that stretch reads MRFFRRK. A helical; Signal-anchor for type II membrane protein membrane pass occupies residues 8 to 28; the sequence is IAIIVILAYAIFSLYAAYNVF. Residues 29–434 lie on the Extracellular side of the membrane; the sequence is FSKRVISRVH…VLEENFFKIT (406 aa).

It belongs to the TMEM5 family.

It is found in the golgi apparatus membrane. The enzyme catalyses 3-O-[Rib-ol-P-Rib-ol-P-3-beta-D-GalNAc-(1-&gt;3)-beta-D-GlcNAc-(1-&gt;4)-(O-6-P-alpha-D-Man)]-Thr-[protein] + UDP-alpha-D-xylose = 3-O-[beta-D-Xyl-(1-&gt;4)-Rib-ol-P-Rib-ol-P-3-beta-D-GalNAc-(1-&gt;3)-beta-D-GlcNAc-(1-&gt;4)-(O-6-P-alpha-D-Man)]-Thr-[protein] + UDP + H(+). It participates in protein modification; protein glycosylation. Functionally, acts as a UDP-D-xylose:ribitol-5-phosphate beta1,4-xylosyltransferase, which catalyzes the transfer of UDP-D-xylose to ribitol 5-phosphate (Rbo5P) to form the Xylbeta1-4Rbo5P linkage on O-mannosyl glycan. Participates in the biosynthesis of the phosphorylated O-mannosyl trisaccharide (N-acetylgalactosamine-beta-3-N-acetylglucosamine-beta-4-(phosphate-6-)mannose), a carbohydrate structure present in alpha-dystroglycan (DAG1), which is required for binding laminin G-like domain-containing extracellular proteins with high affinity. In Danio rerio (Zebrafish), this protein is Ribitol-5-phosphate xylosyltransferase 1 (rxylt1).